A 349-amino-acid chain; its full sequence is MDLIAEPNLKELINSTTHKWIFVGGKGGVGKTTSSCSISIQMALAQPKKQFLLISTDPAHNLSDAFGEKFGKDARKVTGMDNLSCMEIDPSAALKDMNDMSVAQNDKNDGFSDLLQGGGLAELTGSIPGIDEALSFMEVMKHIKRQEEGEGEKYDTVIFDTAPTGHTLRFLQLPQTLSQLLQKFGEIAGRFGPMLNSLTGGGQNMDIMGKVDELKANVEKIREQFTNPDMTTFVCVCISEFLSLYETERLIQELMSYEMDVNSIIVNQLLFADDDAEHNCRRCQARWNMQKKYLDQIGELYDDFHVVKMPLCAGEIRGLNNLKKFSQFLNKEYDPVADNKIIYELEEQK.

26-33 provides a ligand contact to ATP; the sequence is KGGVGKTT. Asp-57 is a catalytic residue. Residues Glu-240 and Asn-267 each coordinate ATP. The Zn(2+) site is built by Cys-280 and Cys-283.

This sequence belongs to the arsA ATPase family. As to quaternary structure, homodimer. Component of the Golgi to ER traffic (GET) complex, which is composed of GET1, GET2 and GET3. Within the complex, GET1 and GET2 form a heterotetramer which is stabilized by phosphatidylinositol binding and which binds to the GET3 homodimer. Interacts with the chloride channel protein GEF1.

It localises to the cytoplasm. Its subcellular location is the endoplasmic reticulum. It is found in the golgi apparatus. ATPase required for the post-translational delivery of tail-anchored (TA) proteins to the endoplasmic reticulum. Recognizes and selectively binds the transmembrane domain of TA proteins in the cytosol. This complex then targets to the endoplasmic reticulum by membrane-bound receptors GET1 and GET2, where the tail-anchored protein is released for insertion. This process is regulated by ATP binding and hydrolysis. ATP binding drives the homodimer towards the closed dimer state, facilitating recognition of newly synthesized TA membrane proteins. ATP hydrolysis is required for insertion. Subsequently, the homodimer reverts towards the open dimer state, lowering its affinity for the GET1-GET2 receptor, and returning it to the cytosol to initiate a new round of targeting. Cooperates with the HDEL receptor ERD2 to mediate the ATP-dependent retrieval of resident ER proteins that contain a C-terminal H-D-E-L retention signal from the Golgi to the ER. Involved in low-level resistance to the oxyanions arsenite and arsenate, and in heat tolerance. In Lachancea thermotolerans (strain ATCC 56472 / CBS 6340 / NRRL Y-8284) (Yeast), this protein is ATPase GET3.